Consider the following 158-residue polypeptide: Transcription factor BTF3 homolog 4 (158 aa).

Lys5 bears the N6-methyllysine mark. The NAC-A/B domain occupies 33–98 (TADDKKLQSS…AEAKPITEML (66 aa)). Phosphothreonine is present on Thr111. Residues 123–158 (QVLDSKTPKPEDIDEEEDDVPDLVENFDEASKNEAN) are disordered. A compositionally biased stretch (acidic residues) spans 134–150 (DIDEEEDDVPDLVENFD).

It belongs to the NAC-beta family.

This is Transcription factor BTF3 homolog 4 (BTF3L4) from Bos taurus (Bovine).